Consider the following 340-residue polypeptide: tRNA N6-adenosine threonylcarbamoyltransferase (340 aa).

Residues His113 and His117 each contribute to the Fe cation site. Residues 135 to 139 (LVSGG), Asp169, Gly182, Asp186, and Asn274 contribute to the substrate site. Asp302 serves as a coordination point for Fe cation.

It belongs to the KAE1 / TsaD family. Fe(2+) serves as cofactor.

Its subcellular location is the cytoplasm. It catalyses the reaction L-threonylcarbamoyladenylate + adenosine(37) in tRNA = N(6)-L-threonylcarbamoyladenosine(37) in tRNA + AMP + H(+). Its function is as follows. Required for the formation of a threonylcarbamoyl group on adenosine at position 37 (t(6)A37) in tRNAs that read codons beginning with adenine. Is involved in the transfer of the threonylcarbamoyl moiety of threonylcarbamoyl-AMP (TC-AMP) to the N6 group of A37, together with TsaE and TsaB. TsaD likely plays a direct catalytic role in this reaction. This Mycolicibacterium smegmatis (strain ATCC 700084 / mc(2)155) (Mycobacterium smegmatis) protein is tRNA N6-adenosine threonylcarbamoyltransferase.